A 711-amino-acid polypeptide reads, in one-letter code: Protein ACTIVITY OF BC1 COMPLEX KINASE 3, chloroplastic (711 aa).

The N-terminal 42 residues, 1 to 42, are a transit peptide targeting the chloroplast; that stretch reads MSLVVGQSLGLTLVGDGLSLRNSKINVGKSKFFSVNRRRLAR. The region spanning 216–546 is the Protein kinase domain; the sequence is SVSPEPIAAA…IELLFKDGKF (331 aa). ATP-binding positions include 222–230 and lysine 245; that span reads IAAASLGQV. Catalysis depends on aspartate 379, which acts as the Proton acceptor.

Belongs to the protein kinase superfamily. ADCK protein kinase family. In terms of assembly, interacts with ABC1K1 in plastoglobules (PG). Interacts with PGM48.

It localises to the plastid. The protein resides in the chloroplast. The protein localises to the plastoglobule. It carries out the reaction L-seryl-[protein] + ATP = O-phospho-L-seryl-[protein] + ADP + H(+). The catalysed reaction is L-threonyl-[protein] + ATP = O-phospho-L-threonyl-[protein] + ADP + H(+). In terms of biological role, kinase that can phosphorylate the tocopherol cyclase VTE1, a key enzyme of tocopherol (vitamin E) metabolism and involved in the recycling of oxidated alpha-tocopherol quinone, possibly stabilizing it at plastoglobules. Also regulates membrane prenylquinone composition. Required for photooxidative stress responses to prevent photosystem II core and chlorophyll degradations. Together with ABC1K1, contributes to plastoglobule (PG) function in prenyl-lipid metabolism, stress response, and thylakoid remodeling. Promotes photodamage of chloroplasts under continuous red light, thus working in opposition to ABC1K1. In Arabidopsis thaliana (Mouse-ear cress), this protein is Protein ACTIVITY OF BC1 COMPLEX KINASE 3, chloroplastic.